A 246-amino-acid chain; its full sequence is Probable transcriptional regulatory protein CLD_1467 (246 aa).

Belongs to the TACO1 family.

It localises to the cytoplasm. In Clostridium botulinum (strain Okra / Type B1), this protein is Probable transcriptional regulatory protein CLD_1467.